Here is a 120-residue protein sequence, read N- to C-terminus: UPF0102 protein PST_1070 (120 aa).

Belongs to the UPF0102 family.

This is UPF0102 protein PST_1070 from Stutzerimonas stutzeri (strain A1501) (Pseudomonas stutzeri).